A 354-amino-acid polypeptide reads, in one-letter code: Uroporphyrinogen decarboxylase (354 aa).

Substrate contacts are provided by residues 27–31, Asp77, Tyr154, Thr209, and His327; that span reads RQAGR.

It belongs to the uroporphyrinogen decarboxylase family. As to quaternary structure, homodimer.

Its subcellular location is the cytoplasm. The catalysed reaction is uroporphyrinogen III + 4 H(+) = coproporphyrinogen III + 4 CO2. Its pathway is porphyrin-containing compound metabolism; protoporphyrin-IX biosynthesis; coproporphyrinogen-III from 5-aminolevulinate: step 4/4. Catalyzes the decarboxylation of four acetate groups of uroporphyrinogen-III to yield coproporphyrinogen-III. This chain is Uroporphyrinogen decarboxylase, found in Salmonella dublin (strain CT_02021853).